The following is a 180-amino-acid chain: UPF0149 protein XC_0904 (180 aa).

This sequence belongs to the UPF0149 family.

The polypeptide is UPF0149 protein XC_0904 (Xanthomonas campestris pv. campestris (strain 8004)).